The following is a 595-amino-acid chain: MAETDIAMPESTPVDSRPAFAIVEELKTKFGENFYVQATFEEFPTVWVERARVQEVLMFLRKVERPYVMLFDLSAMDERLRQHRDGLPASDFTVFYHLLSLERNSDIRIKVALNENDLNLPTATNIWPNANWYEREAYDMFGINFEGHPMLRRILLPTYWEGHPLRKEYSARATEYTPYMQDKAKQDFEQEHLRFVPEDWGLKRGNADEDFMFLNLGPNHPSAHGAFRIVLQLDGEEVKDCVPDIGYHHRGVEKMAERQTWHSFIPYTDRVDYLGGCAQNMPYVMAVEQLAGIKVPERAQVIRVMLNELFRINNHLLYCGTAIQDAGGMTPVFYMFADRQKVYDIVEAITGYRMHPAWFRIGGTAHDLPNNWQKLVKELLDWMPKRLNEYYTAAFKNSVFIGRTRNVAQYDAKSALAWGVTGTGLRATGIDFDVRKYRPYSGYENFDFEVPVEYEGDAYARVLVHFREIEQSLKIIKQCLDNMPSGPYKADHPLAVPPPKDKTLQDIETLITHFLSVSWGPVMPAGEASFMTEVVKGASTYYLTSDKATMSYRTRIRTPTFTHLQQIPSVINGSLVSDLIIYLATIDVVMADVDR.

Positions 1–186 (MAETDIAMPE…TPYMQDKAKQ (186 aa)) are NADH dehydrogenase I subunit C. An NADH dehydrogenase I subunit D region spans residues 210 to 595 (DFMFLNLGPN…IDVVMADVDR (386 aa)).

It in the N-terminal section; belongs to the complex I 30 kDa subunit family. In the C-terminal section; belongs to the complex I 49 kDa subunit family. In terms of assembly, NDH-1 is composed of 13 different subunits. Subunits NuoB, CD, E, F, and G constitute the peripheral sector of the complex.

The protein localises to the cell inner membrane. It catalyses the reaction a quinone + NADH + 5 H(+)(in) = a quinol + NAD(+) + 4 H(+)(out). In terms of biological role, NDH-1 shuttles electrons from NADH, via FMN and iron-sulfur (Fe-S) centers, to quinones in the respiratory chain. The immediate electron acceptor for the enzyme in this species is believed to be ubiquinone. Couples the redox reaction to proton translocation (for every two electrons transferred, four hydrogen ions are translocated across the cytoplasmic membrane), and thus conserves the redox energy in a proton gradient. The chain is NADH-quinone oxidoreductase subunit C/D from Acinetobacter baumannii (strain AYE).